A 78-amino-acid chain; its full sequence is Major outer membrane lipoprotein Lpp (78 aa).

The signal sequence occupies residues methionine 1–glycine 20. A lipid anchor (N-palmitoyl cysteine) is attached at cysteine 21. Residue cysteine 21 is the site of S-diacylglycerol cysteine attachment. 2 consecutive repeats follow at residues asparagine 24–valine 34 and asparagine 38–valine 48. Residues isoleucine 27–lysine 75 adopt a coiled-coil conformation. Lysine 78 bears the N6-murein peptidoglycan lysine mark.

It belongs to the Lpp family. As to quaternary structure, homotrimer.

The protein resides in the cell outer membrane. The protein localises to the secreted. It is found in the cell wall. A highly abundant outer membrane lipoprotein that controls the distance between the inner and outer membranes. The only protein known to be covalently linked to the peptidoglycan network (PGN). Also non-covalently binds the PGN. The link between the cell outer membrane and PGN contributes to maintenance of the structural and functional integrity of the cell envelope, and maintains the correct distance between the PGN and the outer membrane. This is Major outer membrane lipoprotein Lpp from Shigella flexneri.